The primary structure comprises 322 residues: Cysteine protease YopT (322 aa).

Active-site residues include Cys-139, His-258, and Asp-274.

This sequence belongs to the peptidase C58 family. In terms of assembly, interacts with human ARHA.

Its subcellular location is the secreted. Cysteine protease, which is translocated into infected cells and plays a central role in pathogenesis by cleaving the C-terminus end of the human small GTPase RhoA/ARHA, a regulator of cytoskeleton. Once cleaved, ARHA loses its lipid modification, and is released from the cell membrane, leading to the subsequent disruption of actin cytoskeleton of the host cell. The chain is Cysteine protease YopT (yopT) from Yersinia pestis.